The primary structure comprises 1188 residues: Integrin alpha-11 (1188 aa).

A signal peptide spans 1 to 22 (MDLPRGLVVAWALSLWPGFTDT). The Extracellular portion of the chain corresponds to 23-1141 (FNMDTRKPRV…ISKQEDWQVP (1119 aa)). FG-GAP repeat units lie at residues 24–85 (NMDT…NCTK) and 91–151 (VTLS…FSKT). Cys76 and Cys83 are disulfide-bonded. N-linked (GlcNAc...) asparagine glycans are attached at residues Asn82 and Asn95. 2 cysteine pairs are disulfide-bonded: Cys121-Cys139 and Cys129-Cys159. Positions 164-345 (DIVIVLDGSN…AALKDIVDAL (182 aa)) constitute a VWFA domain. Asn291, Asn331, Asn358, Asn449, and Asn462 each carry an N-linked (GlcNAc...) asparagine glycan. FG-GAP repeat units lie at residues 355–406 (TNKN…VIPL), 411–461 (LKEF…TMHN), 462–527 (NRSL…LFVY), 528–586 (NGTL…SILK), and 590–650 (QRIT…FEPS). Ca(2+)-binding residues include Asp488, Asp490, Asp492, and Asp496. Asn528 carries N-linked (GlcNAc...) asparagine glycosylation. The Ca(2+) site is built by Asp551, Asn553, Asp555, Asp559, Asp613, Asn615, Asp617, and Asp621. Asn642 is a glycosylation site (N-linked (GlcNAc...) asparagine). Disulfide bonds link Cys659–Cys668, Cys674–Cys729, and Cys781–Cys787. A glycan (N-linked (GlcNAc...) asparagine) is linked at Asn694. An N-linked (GlcNAc...) asparagine glycan is attached at Asn857. Residues Cys881 and Cys893 are joined by a disulfide bond. Residues Asn894, Asn973, Asn1031, Asn1039, and Asn1059 are each glycosylated (N-linked (GlcNAc...) asparagine). The chain crosses the membrane as a helical span at residues 1142–1164 (IWIIVGSTLGGLLLLALLVLALW). At 1165-1188 (KLGFFRSARRRREPGLDPTPKVLE) the chain is on the cytoplasmic side.

Belongs to the integrin alpha chain family. As to quaternary structure, heterodimer of an alpha and a beta subunit. Alpha-11 associates with beta-1. Interacts with RAB21. According to PubMed:10464311, highest levels of expression in uterus and heart, intermediate levels in skeletal muscle and intermediate to low levels in pancreas, kidney and placenta. According to PubMed:10486209, also found in brain, colon, lung, small intestine, stomach, testis, salivary glands, thyroid glands and prostate. Very low levels in peripheral blood lymphocytes, fetal brain and fetal liver.

It is found in the membrane. Functionally, integrin alpha-11/beta-1 is a receptor for collagen. The sequence is that of Integrin alpha-11 (ITGA11) from Homo sapiens (Human).